A 284-amino-acid polypeptide reads, in one-letter code: Bifunctional protein FolD (284 aa).

Residues 166–168 (GAS) and isoleucine 232 contribute to the NADP(+) site.

It belongs to the tetrahydrofolate dehydrogenase/cyclohydrolase family. Homodimer.

The enzyme catalyses (6R)-5,10-methylene-5,6,7,8-tetrahydrofolate + NADP(+) = (6R)-5,10-methenyltetrahydrofolate + NADPH. It catalyses the reaction (6R)-5,10-methenyltetrahydrofolate + H2O = (6R)-10-formyltetrahydrofolate + H(+). It participates in one-carbon metabolism; tetrahydrofolate interconversion. In terms of biological role, catalyzes the oxidation of 5,10-methylenetetrahydrofolate to 5,10-methenyltetrahydrofolate and then the hydrolysis of 5,10-methenyltetrahydrofolate to 10-formyltetrahydrofolate. The protein is Bifunctional protein FolD of Pseudomonas putida (strain W619).